Consider the following 144-residue polypeptide: NADH dehydrogenase [ubiquinone] 1 alpha subcomplex subunit 13 (144 aa).

An N-acetylalanine modification is found at A2. Residues 30-51 (LSGYSMFAVGIGALIFGYWRMM) traverse the membrane as a helical segment.

The protein belongs to the complex I NDUFA13 subunit family. In terms of assembly, complex I is composed of 45 different subunits. Interacts with CARD15, but not with CARD4. Interacts with STAT3, but not with STAT1, STAT2 and STAT5A. Interacts with OLFM4.

It is found in the mitochondrion inner membrane. Its subcellular location is the nucleus. In terms of biological role, accessory subunit of the mitochondrial membrane respiratory chain NADH dehydrogenase (Complex I), that is believed not to be involved in catalysis. Complex I functions in the transfer of electrons from NADH to the respiratory chain. The immediate electron acceptor for the enzyme is believed to be ubiquinone. Involved in the interferon/all-trans-retinoic acid (IFN/RA) induced cell death. This apoptotic activity is inhibited by interaction with viral IRF1. Prevents the transactivation of STAT3 target genes. May play a role in CARD15-mediated innate mucosal responses and serve to regulate intestinal epithelial cell responses to microbes. The chain is NADH dehydrogenase [ubiquinone] 1 alpha subcomplex subunit 13 (Ndufa13) from Mus musculus (Mouse).